Consider the following 458-residue polypeptide: UDP-N-acetylmuramoylalanine--D-glutamate ligase (458 aa).

Gly124–Thr130 provides a ligand contact to ATP.

This sequence belongs to the MurCDEF family.

Its subcellular location is the cytoplasm. The catalysed reaction is UDP-N-acetyl-alpha-D-muramoyl-L-alanine + D-glutamate + ATP = UDP-N-acetyl-alpha-D-muramoyl-L-alanyl-D-glutamate + ADP + phosphate + H(+). Its pathway is cell wall biogenesis; peptidoglycan biosynthesis. Its function is as follows. Cell wall formation. Catalyzes the addition of glutamate to the nucleotide precursor UDP-N-acetylmuramoyl-L-alanine (UMA). In Clostridium botulinum (strain Alaska E43 / Type E3), this protein is UDP-N-acetylmuramoylalanine--D-glutamate ligase.